We begin with the raw amino-acid sequence, 345 residues long: Phosphate acyltransferase (345 aa).

The protein belongs to the PlsX family. Homodimer. Probably interacts with PlsY.

Its subcellular location is the cytoplasm. It carries out the reaction a fatty acyl-[ACP] + phosphate = an acyl phosphate + holo-[ACP]. The protein operates within lipid metabolism; phospholipid metabolism. Catalyzes the reversible formation of acyl-phosphate (acyl-PO(4)) from acyl-[acyl-carrier-protein] (acyl-ACP). This enzyme utilizes acyl-ACP as fatty acyl donor, but not acyl-CoA. The sequence is that of Phosphate acyltransferase from Limosilactobacillus fermentum (strain NBRC 3956 / LMG 18251) (Lactobacillus fermentum).